We begin with the raw amino-acid sequence, 364 residues long: tRNA-specific 2-thiouridylase MnmA 1 (364 aa).

ATP contacts are provided by residues 11-18 and Phe-37; that span reads GMSGGTDS. Cys-96 acts as the Nucleophile in catalysis. Cysteines 96 and 193 form a disulfide. Gly-120 contributes to the ATP binding site. Residues 142-144 form an interaction with tRNA region; the sequence is KDQ. The active-site Cysteine persulfide intermediate is the Cys-193. Residues 309 to 310 form an interaction with tRNA region; that stretch reads RY.

This sequence belongs to the MnmA/TRMU family.

The protein localises to the cytoplasm. The catalysed reaction is S-sulfanyl-L-cysteinyl-[protein] + uridine(34) in tRNA + AH2 + ATP = 2-thiouridine(34) in tRNA + L-cysteinyl-[protein] + A + AMP + diphosphate + H(+). Its function is as follows. Catalyzes the 2-thiolation of uridine at the wobble position (U34) of tRNA, leading to the formation of s(2)U34. This is tRNA-specific 2-thiouridylase MnmA 1 from Bacteroides fragilis (strain ATCC 25285 / DSM 2151 / CCUG 4856 / JCM 11019 / LMG 10263 / NCTC 9343 / Onslow / VPI 2553 / EN-2).